Reading from the N-terminus, the 83-residue chain is Small ribosomal subunit protein uS17 (83 aa).

Belongs to the universal ribosomal protein uS17 family. In terms of assembly, part of the 30S ribosomal subunit.

One of the primary rRNA binding proteins, it binds specifically to the 5'-end of 16S ribosomal RNA. This chain is Small ribosomal subunit protein uS17, found in Francisella philomiragia subsp. philomiragia (strain ATCC 25017 / CCUG 19701 / FSC 153 / O#319-036).